The primary structure comprises 160 residues: Cytochrome b6-f complex subunit 4 (160 aa).

The next 3 membrane-spanning stretches (helical) occupy residues L36–V56, L95–E115, and T131–L151.

It belongs to the cytochrome b family. PetD subfamily. The 4 large subunits of the cytochrome b6-f complex are cytochrome b6, subunit IV (17 kDa polypeptide, PetD), cytochrome f and the Rieske protein, while the 4 small subunits are PetG, PetL, PetM and PetN. The complex functions as a dimer.

Its subcellular location is the cellular thylakoid membrane. Its function is as follows. Component of the cytochrome b6-f complex, which mediates electron transfer between photosystem II (PSII) and photosystem I (PSI), cyclic electron flow around PSI, and state transitions. In Nostoc punctiforme (strain ATCC 29133 / PCC 73102), this protein is Cytochrome b6-f complex subunit 4.